The chain runs to 749 residues: Metabotropic glutamate receptor-like protein M (749 aa).

The signal sequence occupies residues 1 to 22 (MIKLILSLIFLIICCNINPSES). The Extracellular portion of the chain corresponds to 23–385 (FKLITLTTGP…KIEFSSSVQK (363 aa)). N67, N164, N257, N271, and N345 each carry an N-linked (GlcNAc...) asparagine glycan. Residues 386–406 (GFSIVSGCLIAFVILMMVGIV) traverse the membrane as a helical segment. At 407–419 (YYKDTPSIRSASP) the chain is on the cytoplasmic side. The chain crosses the membrane as a helical span at residues 420–440 (IFLNFSLIGGIIIYIGIIIWV). The Extracellular portion of the chain corresponds to 441 to 456 (GPISTHQCNARFWLVT). Residues 457-477 (LGFSTLIGSLVVKNFRIWLIF) traverse the membrane as a helical segment. Topologically, residues 478–492 (DNPELKAIKITNYQL) are cytoplasmic. The helical transmembrane segment at 493–513 (FPWVGLCLVINIVLMAILTSV) threads the bilayer. Over 514–544 (GDLKAIEAQGIDSLGKYEYMTVCKMNSAGAS) the chain is Extracellular. Residues 545 to 565 (TLYSILAYFAALLLVGVFVSW) form a helical membrane-spanning segment. At 566-579 (KIRIVDIEEFNESK) the chain is on the cytoplasmic side. The chain crosses the membrane as a helical span at residues 580-600 (AIANTLYAVSFCLFVIVPLMI). Residues 601-609 (SPQEKQSET) lie on the Extracellular side of the membrane. The chain crosses the membrane as a helical span at residues 610 to 630 (IILCVAGLFITTAALLIVFIP). The Cytoplasmic segment spans residues 631-749 (KFWRVFIYGK…EEPVKTESQE (119 aa)). A disordered region spans residues 658 to 749 (ARAESLSKNS…EEPVKTESQE (92 aa)). Positions 698–716 (SSLSEPNKPTKNNDGNVNV) are enriched in polar residues. Acidic residues predominate over residues 725-740 (FTDDTISEFDENEVNE).

It in the N-terminal section; belongs to the BMP lipoprotein family. In the C-terminal section; belongs to the G-protein coupled receptor 3 family. GABA-B receptor subfamily.

The protein localises to the membrane. This Dictyostelium discoideum (Social amoeba) protein is Metabotropic glutamate receptor-like protein M (grlM).